Reading from the N-terminus, the 154-residue chain is Crossover junction endodeoxyribonuclease RuvC (154 aa).

Residues Asp7, Glu67, and Asp139 contribute to the active site. Mg(2+) is bound by residues Asp7, Glu67, and Asp139.

It belongs to the RuvC family. In terms of assembly, homodimer which binds Holliday junction (HJ) DNA. The HJ becomes 2-fold symmetrical on binding to RuvC with unstacked arms; it has a different conformation from HJ DNA in complex with RuvA. In the full resolvosome a probable DNA-RuvA(4)-RuvB(12)-RuvC(2) complex forms which resolves the HJ. It depends on Mg(2+) as a cofactor.

The protein resides in the cytoplasm. It catalyses the reaction Endonucleolytic cleavage at a junction such as a reciprocal single-stranded crossover between two homologous DNA duplexes (Holliday junction).. Its function is as follows. The RuvA-RuvB-RuvC complex processes Holliday junction (HJ) DNA during genetic recombination and DNA repair. Endonuclease that resolves HJ intermediates. Cleaves cruciform DNA by making single-stranded nicks across the HJ at symmetrical positions within the homologous arms, yielding a 5'-phosphate and a 3'-hydroxyl group; requires a central core of homology in the junction. The consensus cleavage sequence is 5'-(A/T)TT(C/G)-3'. Cleavage occurs on the 3'-side of the TT dinucleotide at the point of strand exchange. HJ branch migration catalyzed by RuvA-RuvB allows RuvC to scan DNA until it finds its consensus sequence, where it cleaves and resolves the cruciform DNA. In Synechococcus sp. (strain CC9605), this protein is Crossover junction endodeoxyribonuclease RuvC.